Reading from the N-terminus, the 631-residue chain is 1-deoxy-D-xylulose-5-phosphate synthase (631 aa).

Thiamine diphosphate-binding positions include histidine 87 and 128–130 (GHS). Residue aspartate 159 participates in Mg(2+) binding. Thiamine diphosphate contacts are provided by residues 160 to 161 (GA), asparagine 188, phenylalanine 295, and glutamate 378. Asparagine 188 contributes to the Mg(2+) binding site.

It belongs to the transketolase family. DXPS subfamily. As to quaternary structure, homodimer. Requires Mg(2+) as cofactor. The cofactor is thiamine diphosphate.

The catalysed reaction is D-glyceraldehyde 3-phosphate + pyruvate + H(+) = 1-deoxy-D-xylulose 5-phosphate + CO2. It functions in the pathway metabolic intermediate biosynthesis; 1-deoxy-D-xylulose 5-phosphate biosynthesis; 1-deoxy-D-xylulose 5-phosphate from D-glyceraldehyde 3-phosphate and pyruvate: step 1/1. Catalyzes the acyloin condensation reaction between C atoms 2 and 3 of pyruvate and glyceraldehyde 3-phosphate to yield 1-deoxy-D-xylulose-5-phosphate (DXP). The chain is 1-deoxy-D-xylulose-5-phosphate synthase from Pseudomonas syringae pv. tomato (strain ATCC BAA-871 / DC3000).